The sequence spans 1526 residues: High affinity cGMP-specific 3',5'-cyclic phosphodiesterase 9A (1526 aa).

The span at 1–43 (MYQDSGCSSSSSRRGSSSAAAATSTAATAAETAAAAAATTTSS) shows a compositional bias: low complexity. 3 disordered regions span residues 1 to 48 (MYQD…DEET), 266 to 348 (SSRS…SGTA), and 393 to 476 (RHHH…ASDC). Composition is skewed to basic and acidic residues over residues 270-282 (RSSE…HEQD) and 305-314 (EHPSEKPERT). Composition is skewed to low complexity over residues 324–348 (IAVT…SGTA) and 401–440 (QQHQ…ATAT). Positions 441-462 (PSVEQPATSGTTNIHLQPTSLP) are enriched in polar residues. The PDEase domain occupies 664–985 (VKRRFLEICD…EYYRRLNDAQ (322 aa)). The Proton donor role is filled by histidine 740. Residue 740–744 (HNFRH) participates in 3',5'-cyclic GMP binding. Positions 744, 780, 781, and 890 each coordinate Zn(2+). 3',5'-cyclic GMP is bound by residues aspartate 781 and aspartate 890. A Mg(2+)-binding site is contributed by aspartate 781. 5 disordered regions span residues 986–1170 (TKTR…SSGG), 1265–1284 (TEAD…KKIP), 1314–1351 (SNGS…GSSW), 1372–1406 (RFGS…DGLG), and 1469–1496 (RYSS…LTTG). Positions 993–1005 (ADSNTSATSDSNS) are enriched in low complexity. The span at 1033–1057 (NSQGSGGGGGGGGGGGAGGGTGSGC) shows a compositional bias: gly residues. Polar residues predominate over residues 1065–1093 (VSPQMPRSGSGISVKSRRSIPSQKSASRT). Over residues 1125–1136 (VAEKTSKFKVDT) the composition is skewed to basic and acidic residues. The segment covering 1139–1148 (SSNRSKSSHS) has biased composition (low complexity). A compositionally biased stretch (low complexity) spans 1314–1324 (SNGSTRSSASS). Over residues 1325 to 1340 (GRGGSGVPGGSGGSGM) the composition is skewed to gly residues. Low complexity-rich tracts occupy residues 1341–1350 (PGPSAGSGSS) and 1375–1397 (STRS…NANG). Residues 1470 to 1486 (YSSNDSSRHPSNNTLQS) are compositionally biased toward polar residues.

Belongs to the cyclic nucleotide phosphodiesterase family. PDE9 subfamily. The cofactor is Zn(2+). Requires Mg(2+) as cofactor. In terms of tissue distribution, expressed in Malpighian tubules and adult fly head.

It carries out the reaction 3',5'-cyclic GMP + H2O = GMP + H(+). The protein operates within purine metabolism; 3',5'-cyclic GMP degradation; GMP from 3',5'-cyclic GMP: step 1/1. In terms of biological role, specifically hydrolyzes the second messenger cGMP, which is a key regulator of many important physiological processes. Highly specific: compared to other members of the cyclic nucleotide phosphodiesterase family, has the highest affinity and selectivity for cGMP. The sequence is that of High affinity cGMP-specific 3',5'-cyclic phosphodiesterase 9A from Drosophila melanogaster (Fruit fly).